The primary structure comprises 1101 residues: Translation initiation factor IF-2 (1101 aa).

Disordered stretches follow at residues 81–437 and 452–509; these read QEIL…EDDF and SIST…QRAE. Polar residues predominate over residues 93–108; that stretch reads PFSSTDAPVGSGQSSP. A compositionally biased stretch (pro residues) spans 110-124; sequence IEPPRPPMKPQPPSP. Polar residues-rich tracts occupy residues 128–149 and 157–184; these read EVTS…GSSS and SPMS…QLKY. Residues 185–196 are compositionally biased toward low complexity; it reads NQEQSNQLEQES. Polar residues predominate over residues 197-206; the sequence is AISSELSEVN. Basic and acidic residues-rich tracts occupy residues 228-237, 248-288, and 295-340; these read SKEKEAKSNE, KENK…DKKS, and VKRE…ELKR. A compositionally biased stretch (acidic residues) spans 361-378; sequence EPEDVEDTAEDLLEEDPL. Basic residues-rich tracts occupy residues 385 to 397 and 414 to 428; these read PKLK…KVGK and KAGK…KRRQ. Residues 484–506 are compositionally biased toward basic and acidic residues; the sequence is EPGRGKSAERERSERKDRKEQPQ. A tr-type G domain is found at 592–765; sequence RRPPVVTIMG…LLVAEVGELS (174 aa). The G1 stretch occupies residues 601 to 608; sequence GHVDHGKT. Position 601–608 (601–608) interacts with GTP; sequence GHVDHGKT. Residues 626-630 are G2; that stretch reads GITQH. A G3 region spans residues 651–654; the sequence is DTPG. Residues 651-655 and 705-708 each bind GTP; these read DTPGH and NKID. A G4 region spans residues 705–708; that stretch reads NKID. The segment at 741 to 743 is G5; sequence SAL.

This sequence belongs to the TRAFAC class translation factor GTPase superfamily. Classic translation factor GTPase family. IF-2 subfamily.

The protein resides in the cytoplasm. One of the essential components for the initiation of protein synthesis. Protects formylmethionyl-tRNA from spontaneous hydrolysis and promotes its binding to the 30S ribosomal subunits. Also involved in the hydrolysis of GTP during the formation of the 70S ribosomal complex. This is Translation initiation factor IF-2 from Gloeothece citriformis (strain PCC 7424) (Cyanothece sp. (strain PCC 7424)).